The chain runs to 375 residues: Probable 1-acyl-sn-glycerol-3-phosphate acyltransferase 5 (375 aa).

A run of 2 helical transmembrane segments spans residues 21–41 (IICLMVLVSTAFMMLIFWGFL) and 57–77 (CVSFFFGSWLALWPFLFEKIN). The HXXXXD motif signature appears at 100 to 105 (HRTEVD). A run of 2 helical transmembrane segments spans residues 312–332 (YLINCLAVIAFTTICTHLTFF) and 337–357 (WFRIYVSLACVYLTSATHFNL).

The protein belongs to the 1-acyl-sn-glycerol-3-phosphate acyltransferase family. As to expression, widely expressed at low level.

The protein resides in the membrane. It catalyses the reaction a 1-acyl-sn-glycero-3-phosphate + an acyl-CoA = a 1,2-diacyl-sn-glycero-3-phosphate + CoA. Its pathway is phospholipid metabolism; CDP-diacylglycerol biosynthesis; CDP-diacylglycerol from sn-glycerol 3-phosphate: step 2/3. In terms of biological role, may convert lysophosphatidic acid (LPA) into phosphatidic acid by incorporating acyl moiety at the 2 position. Has no activity when expressed in bacteria or yeast. The protein is Probable 1-acyl-sn-glycerol-3-phosphate acyltransferase 5 (LPAT5) of Arabidopsis thaliana (Mouse-ear cress).